Here is a 282-residue protein sequence, read N- to C-terminus: Succinate dehydrogenase [ubiquinone] iron-sulfur subunit, mitochondrial (282 aa).

Residues 1-30 (MAATVGVSLKRGFPAAVLGRVGLQFQACRG) constitute a mitochondrion transit peptide. The 2Fe-2S ferredoxin-type domain occupies 42–135 (KKFAIYRWDP…VSKIYPLPHM (94 aa)). K53 and K57 each carry N6-acetyllysine. 4 residues coordinate [2Fe-2S] cluster: C95, C100, C103, and C115. The interval 148-220 (FYAQYKSIEP…PAVLMQAYRW (73 aa)) is interaction with SDHAF1. Positions 178–208 (DREKLDGLYECILCACCSTSCPSYWWNGDKY) constitute a 4Fe-4S ferredoxin-type domain. Residues C188, C191, and C194 each contribute to the [4Fe-4S] cluster site. C198 is a [3Fe-4S] cluster binding site. Position 203 (W203) interacts with a ubiquinone. Positions 245 and 251 each coordinate [3Fe-4S] cluster. C255 lines the [4Fe-4S] cluster pocket.

Belongs to the succinate dehydrogenase/fumarate reductase iron-sulfur protein family. Component of complex II composed of four subunits: the flavoprotein (FP) SDHA, iron-sulfur protein (IP) SDHB, and a cytochrome b560 composed of SDHC and SDHD. Interacts with SDHAF1; the interaction is required for iron-sulfur cluster incorporation into SDHB. The cofactor is [2Fe-2S] cluster. Requires [3Fe-4S] cluster as cofactor. [4Fe-4S] cluster serves as cofactor.

It localises to the mitochondrion inner membrane. The catalysed reaction is a quinone + succinate = fumarate + a quinol. It carries out the reaction (R)-malate + a quinone = enol-oxaloacetate + a quinol. It catalyses the reaction (S)-malate + a quinone = enol-oxaloacetate + a quinol. It participates in carbohydrate metabolism; tricarboxylic acid cycle; fumarate from succinate (eukaryal route): step 1/1. Its activity is regulated as follows. Enol-oxaloacetate inhibits the succinate dehydrogenase activity. In terms of biological role, iron-sulfur protein (IP) subunit of the succinate dehydrogenase complex (mitochondrial respiratory chain complex II), responsible for transferring electrons from succinate to ubiquinone (coenzyme Q). SDH also oxidizes malate to the non-canonical enol form of oxaloacetate, enol-oxaloacetate. Enol-oxaloacetate, which is a potent inhibitor of the succinate dehydrogenase activity, is further isomerized into keto-oxaloacetate. This chain is Succinate dehydrogenase [ubiquinone] iron-sulfur subunit, mitochondrial (Sdhb), found in Mus musculus (Mouse).